The primary structure comprises 104 residues: uncharacterized protein (104 aa).

The interval 1-24 (MISTEKSSDAVAMHCPSGDQHNSE) is disordered.

This is an uncharacterized protein from Saccharomyces cerevisiae (strain ATCC 204508 / S288c) (Baker's yeast).